The primary structure comprises 188 residues: Small ribosomal subunit protein bS16 (188 aa).

The disordered stretch occupies residues I155–A188. The segment covering A164–A188 has biased composition (acidic residues).

The protein belongs to the bacterial ribosomal protein bS16 family.

The polypeptide is Small ribosomal subunit protein bS16 (Flavobacterium johnsoniae (strain ATCC 17061 / DSM 2064 / JCM 8514 / BCRC 14874 / CCUG 350202 / NBRC 14942 / NCIMB 11054 / UW101) (Cytophaga johnsonae)).